Consider the following 519-residue polypeptide: 2,3-bisphosphoglycerate-independent phosphoglycerate mutase (519 aa).

2 residues coordinate Mn(2+): aspartate 18 and serine 68. Serine 68 serves as the catalytic Phosphoserine intermediate. Residues histidine 129, 159–160 (RD), arginine 191, arginine 197, 267–270 (RADR), and lysine 341 each bind substrate. The Mn(2+) site is built by aspartate 408, histidine 412, aspartate 449, histidine 450, and histidine 468.

It belongs to the BPG-independent phosphoglycerate mutase family. In terms of assembly, monomer. Requires Mn(2+) as cofactor.

It catalyses the reaction (2R)-2-phosphoglycerate = (2R)-3-phosphoglycerate. Its pathway is carbohydrate degradation; glycolysis; pyruvate from D-glyceraldehyde 3-phosphate: step 3/5. Catalyzes the interconversion of 2-phosphoglycerate and 3-phosphoglycerate. The chain is 2,3-bisphosphoglycerate-independent phosphoglycerate mutase from Coxiella burnetii (strain RSA 331 / Henzerling II).